The chain runs to 205 residues: N-(5'-phosphoribosyl)anthranilate isomerase (205 aa).

The protein belongs to the TrpF family.

It catalyses the reaction N-(5-phospho-beta-D-ribosyl)anthranilate = 1-(2-carboxyphenylamino)-1-deoxy-D-ribulose 5-phosphate. It participates in amino-acid biosynthesis; L-tryptophan biosynthesis; L-tryptophan from chorismate: step 3/5. This Thiobacillus denitrificans (strain ATCC 25259 / T1) protein is N-(5'-phosphoribosyl)anthranilate isomerase.